The primary structure comprises 48 residues: Small, acid-soluble spore protein N (48 aa).

Residues 1–48 (MGINKKDGQPQYAPSHLGTKPVKYKRNKGEKFHDKSNGHPIVMQTKGE) are disordered. A compositionally biased stretch (basic and acidic residues) spans 27-37 (NKGEKFHDKSN).

Belongs to the SspN family.

It is found in the spore core. This is Small, acid-soluble spore protein N from Bacillus velezensis (strain DSM 23117 / BGSC 10A6 / LMG 26770 / FZB42) (Bacillus amyloliquefaciens subsp. plantarum).